A 361-amino-acid chain; its full sequence is Probable galacturonosyltransferase-like 5 (361 aa).

The Cytoplasmic portion of the chain corresponds to 1–6; it reads MHWITR. The chain crosses the membrane as a helical; Signal-anchor for type II membrane protein span at residues 7–27; that stretch reads FSAFFSAALAMILLSPSLQSF. Over 28-361 the chain is Lumenal; sequence SPAAAIRSSH…APYDLYKHSH (334 aa). Asn-218 and Asn-234 each carry an N-linked (GlcNAc...) asparagine glycan.

This sequence belongs to the glycosyltransferase 8 family.

The protein localises to the golgi apparatus membrane. It functions in the pathway glycan metabolism; pectin biosynthesis. In terms of biological role, may be involved in pectin and/or xylans biosynthesis in cell walls. The sequence is that of Probable galacturonosyltransferase-like 5 (GATL5) from Arabidopsis thaliana (Mouse-ear cress).